The chain runs to 336 residues: Pyridoxal 5'-phosphate synthase subunit PdxS (336 aa).

Asp-64 is a D-ribose 5-phosphate binding site. Lys-121 acts as the Schiff-base intermediate with D-ribose 5-phosphate in catalysis. Gly-193 lines the D-ribose 5-phosphate pocket. Lys-205 contacts D-glyceraldehyde 3-phosphate. D-ribose 5-phosphate is bound by residues Gly-254 and 275–276 (GS).

This sequence belongs to the PdxS/SNZ family. In the presence of PdxT, forms a dodecamer of heterodimers.

The catalysed reaction is aldehydo-D-ribose 5-phosphate + D-glyceraldehyde 3-phosphate + L-glutamine = pyridoxal 5'-phosphate + L-glutamate + phosphate + 3 H2O + H(+). Its pathway is cofactor biosynthesis; pyridoxal 5'-phosphate biosynthesis. Functionally, catalyzes the formation of pyridoxal 5'-phosphate from ribose 5-phosphate (RBP), glyceraldehyde 3-phosphate (G3P) and ammonia. The ammonia is provided by the PdxT subunit. Can also use ribulose 5-phosphate and dihydroxyacetone phosphate as substrates, resulting from enzyme-catalyzed isomerization of RBP and G3P, respectively. This is Pyridoxal 5'-phosphate synthase subunit PdxS from Pyrobaculum aerophilum (strain ATCC 51768 / DSM 7523 / JCM 9630 / CIP 104966 / NBRC 100827 / IM2).